Reading from the N-terminus, the 306-residue chain is MLSLAQLESWFFIAPALLLAVLSGYLAERVGIINIAINGGMVFGGLFMALLSYGFTNNLNQSAPSWSLFITIPLSVLFSSVIGCLFALAAVKLRADHVIVGTGINLLASGITLFISQNAASLFSDTTLRVRYLFPIQTTVSIEAIGVFVFSLLLIGFVWYLMSFTKTGLRYRAVGENPNVIDTQGISVYKYQWIGAICSMMVAGLSGSLFVLSVSNFPFNSGDVNGLGFIAIAIMIISMWRIIPSIFIGLIFAYAYVFTNSQIGSNSNSYLLRTIPFIISLLVMLLFGFLNVAPKNIGKHFDKGLR.

8 helical membrane passes run 7–27 (LESW…GYLA), 30–50 (VGII…FMAL), 68–88 (LFIT…LFAL), 95–115 (ADHV…TLFI), 144–164 (AIGV…LMSF), 194–214 (IGAI…VLSV), 232–252 (IAIM…GLIF), and 274–294 (TIPF…NVAP).

It localises to the cell membrane. This is an uncharacterized protein from Mycoplasma genitalium (strain ATCC 33530 / DSM 19775 / NCTC 10195 / G37) (Mycoplasmoides genitalium).